The chain runs to 440 residues: Ribulose bisphosphate carboxylase large chain (440 aa).

K4 is subject to N6,N6,N6-trimethyllysine. Positions 113 and 163 each coordinate substrate. K165 (proton acceptor) is an active-site residue. K167 contacts substrate. Mg(2+)-binding residues include K191, D193, and E194. K191 is modified (N6-carboxylysine). The Proton acceptor role is filled by H284. Substrate contacts are provided by R285, H317, and S369.

It belongs to the RuBisCO large chain family. Type I subfamily. As to quaternary structure, heterohexadecamer of 8 large chains and 8 small chains; disulfide-linked. The disulfide link is formed within the large subunit homodimers. It depends on Mg(2+) as a cofactor. In terms of processing, the disulfide bond which can form in the large chain dimeric partners within the hexadecamer appears to be associated with oxidative stress and protein turnover.

The protein localises to the plastid. It localises to the chloroplast. It carries out the reaction 2 (2R)-3-phosphoglycerate + 2 H(+) = D-ribulose 1,5-bisphosphate + CO2 + H2O. The enzyme catalyses D-ribulose 1,5-bisphosphate + O2 = 2-phosphoglycolate + (2R)-3-phosphoglycerate + 2 H(+). Functionally, ruBisCO catalyzes two reactions: the carboxylation of D-ribulose 1,5-bisphosphate, the primary event in carbon dioxide fixation, as well as the oxidative fragmentation of the pentose substrate in the photorespiration process. Both reactions occur simultaneously and in competition at the same active site. The sequence is that of Ribulose bisphosphate carboxylase large chain from Polystichum munitum (Western sword-fern).